The chain runs to 777 residues: Endonuclease MutS2 (777 aa).

328–335 (GPNTGGKT) is an ATP binding site. The region spanning 702-777 (LDLRGKRYEE…GSGCTIATLG (76 aa)) is the Smr domain.

The protein belongs to the DNA mismatch repair MutS family. MutS2 subfamily. Homodimer. Binds to stalled ribosomes, contacting rRNA.

Its function is as follows. Endonuclease that is involved in the suppression of homologous recombination and thus may have a key role in the control of bacterial genetic diversity. Acts as a ribosome collision sensor, splitting the ribosome into its 2 subunits. Detects stalled/collided 70S ribosomes which it binds and splits by an ATP-hydrolysis driven conformational change. Acts upstream of the ribosome quality control system (RQC), a ribosome-associated complex that mediates the extraction of incompletely synthesized nascent chains from stalled ribosomes and their subsequent degradation. Probably generates substrates for RQC. In Streptococcus uberis (strain ATCC BAA-854 / 0140J), this protein is Endonuclease MutS2.